Consider the following 123-residue polypeptide: Small ribosomal subunit protein uS12 (123 aa).

Asp-89 bears the 3-methylthioaspartic acid mark.

It belongs to the universal ribosomal protein uS12 family. In terms of assembly, part of the 30S ribosomal subunit. Contacts proteins S8 and S17. May interact with IF1 in the 30S initiation complex.

Functionally, with S4 and S5 plays an important role in translational accuracy. Its function is as follows. Interacts with and stabilizes bases of the 16S rRNA that are involved in tRNA selection in the A site and with the mRNA backbone. Located at the interface of the 30S and 50S subunits, it traverses the body of the 30S subunit contacting proteins on the other side and probably holding the rRNA structure together. The combined cluster of proteins S8, S12 and S17 appears to hold together the shoulder and platform of the 30S subunit. This Nitrobacter hamburgensis (strain DSM 10229 / NCIMB 13809 / X14) protein is Small ribosomal subunit protein uS12.